Here is a 457-residue protein sequence, read N- to C-terminus: Phosphomethylpyrimidine synthase (457 aa).

Substrate is bound by residues N80, M109, Y139, H175, 195 to 197 (SRG), 236 to 239 (DSLR), and E275. H279 is a Zn(2+) binding site. Y302 is a binding site for substrate. Position 343 (H343) interacts with Zn(2+). The [4Fe-4S] cluster site is built by C423, C426, and C431.

It belongs to the ThiC family. Requires [4Fe-4S] cluster as cofactor.

It carries out the reaction 5-amino-1-(5-phospho-beta-D-ribosyl)imidazole + S-adenosyl-L-methionine = 4-amino-2-methyl-5-(phosphooxymethyl)pyrimidine + CO + 5'-deoxyadenosine + formate + L-methionine + 3 H(+). It functions in the pathway cofactor biosynthesis; thiamine diphosphate biosynthesis. In terms of biological role, catalyzes the synthesis of the hydroxymethylpyrimidine phosphate (HMP-P) moiety of thiamine from aminoimidazole ribotide (AIR) in a radical S-adenosyl-L-methionine (SAM)-dependent reaction. The protein is Phosphomethylpyrimidine synthase of Nostoc punctiforme (strain ATCC 29133 / PCC 73102).